Here is a 62-residue protein sequence, read N- to C-terminus: Potassium channel toxin alpha-KTx Tx308 (62 aa).

Positions 1–18 are cleaved as a signal peptide; that stretch reads MQKLFIVLLLFCILRLDA. 3 disulfide bridges follow: Cys-28–Cys-46, Cys-33–Cys-59, and Cys-37–Cys-61.

It belongs to the short scorpion toxin superfamily. Potassium channel inhibitor family. Alpha-KTx 23 subfamily. As to expression, expressed by the venom gland.

It is found in the secreted. Its function is as follows. May block potassium channels. The polypeptide is Potassium channel toxin alpha-KTx Tx308 (Buthus israelis (Israeli scorpion)).